The sequence spans 396 residues: Elongation factor Tu (396 aa).

Residues 10–206 enclose the tr-type G domain; sequence KPHVNVGTIG…ALDSYIPTPE (197 aa). Positions 19–26 are G1; the sequence is GHVDHGKT. 19–26 contributes to the GTP binding site; the sequence is GHVDHGKT. Thr-26 is a binding site for Mg(2+). Positions 60 to 64 are G2; it reads GITIN. The G3 stretch occupies residues 81 to 84; it reads DCPG. Residues 81–85 and 136–139 each bind GTP; these read DCPGH and NKCD. The segment at 136–139 is G4; it reads NKCD. Positions 174 to 176 are G5; the sequence is SAK.

The protein belongs to the TRAFAC class translation factor GTPase superfamily. Classic translation factor GTPase family. EF-Tu/EF-1A subfamily. As to quaternary structure, monomer.

The protein resides in the cytoplasm. The catalysed reaction is GTP + H2O = GDP + phosphate + H(+). In terms of biological role, GTP hydrolase that promotes the GTP-dependent binding of aminoacyl-tRNA to the A-site of ribosomes during protein biosynthesis. The polypeptide is Elongation factor Tu (Herminiimonas arsenicoxydans).